A 525-amino-acid chain; its full sequence is ADP-ribosylation factor GTPase-activating protein 3 (525 aa).

Residues 10–126 (LAIFKRLRSV…IKTLATQATR (117 aa)) form the Arf-GAP domain. The C4-type zinc finger occupies 25-48 (CFDCGAKNPSWASISYGVFLCIDC). Residues 160–233 (VSGATQASAQ…KGLGAKKGSL (74 aa)) are disordered. Over residues 162–177 (GATQASAQPEPASSTP) the composition is skewed to polar residues. Residues 222 to 233 (AKKGLGAKKGSL) show a composition bias toward low complexity. 4 positions are modified to phosphoserine: S232, S242, S271, and S275. The interval 249 to 271 (QAQAVDKRKEQEDLARGTPKEES) is disordered. Positions 293–305 (LNLSGQKKAEAER) are enriched in basic and acidic residues. Disordered regions lie at residues 293–364 (LNLS…SSSR) and 377–428 (FSSW…EAQK). Residues 319 to 333 (HSVTSDMQTIEQESP) are compositionally biased toward polar residues. S332 is subject to Phosphoserine. The span at 349-363 (SYFSSSSKWSEQSSS) shows a compositional bias: low complexity. At S379 the chain carries Phosphoserine. Positions 387–398 (YWKKDSSRDPEP) are enriched in basic and acidic residues. Phosphoserine is present on residues S437, S460, S462, S464, S466, and S467.

Its subcellular location is the cytoplasm. The protein localises to the golgi apparatus membrane. Its activity is regulated as follows. GAP activity stimulated by phosphatidylinositol 4,5-bisphosphate (PIP2). Its function is as follows. GTPase-activating protein (GAP) for ADP ribosylation factor 1 (ARF1). Hydrolysis of ARF1-bound GTP may lead to dissociation of coatomer from Golgi-derived membranes to allow fusion with target membranes. In Rattus norvegicus (Rat), this protein is ADP-ribosylation factor GTPase-activating protein 3.